Consider the following 393-residue polypeptide: Elongation factor Tu (393 aa).

Residues 10-203 form the tr-type G domain; the sequence is KPHVNIGTIG…AVDNYIPTPV (194 aa). The tract at residues 19–26 is G1; the sequence is GHVDHGKT. 19–26 is a binding site for GTP; the sequence is GHVDHGKT. A Mg(2+)-binding site is contributed by Thr26. Residues 60–64 are G2; sequence GITIS. The segment at 81 to 84 is G3; the sequence is DCPG. GTP is bound by residues 81–85 and 136–139; these read DCPGH and NKVD. The segment at 136–139 is G4; that stretch reads NKVD. Residues 173–175 are G5; sequence SAL.

This sequence belongs to the TRAFAC class translation factor GTPase superfamily. Classic translation factor GTPase family. EF-Tu/EF-1A subfamily. Monomer.

Its subcellular location is the cytoplasm. The enzyme catalyses GTP + H2O = GDP + phosphate + H(+). Functionally, GTP hydrolase that promotes the GTP-dependent binding of aminoacyl-tRNA to the A-site of ribosomes during protein biosynthesis. The sequence is that of Elongation factor Tu from Chloroherpeton thalassium (strain ATCC 35110 / GB-78).